We begin with the raw amino-acid sequence, 202 residues long: ATP-dependent Clp protease proteolytic subunit (202 aa).

The Nucleophile role is filled by Ser-101. The active site involves His-126.

The protein belongs to the peptidase S14 family. Component of the chloroplastic Clp protease core complex.

Its subcellular location is the plastid. It is found in the chloroplast stroma. It catalyses the reaction Hydrolysis of proteins to small peptides in the presence of ATP and magnesium. alpha-casein is the usual test substrate. In the absence of ATP, only oligopeptides shorter than five residues are hydrolyzed (such as succinyl-Leu-Tyr-|-NHMec, and Leu-Tyr-Leu-|-Tyr-Trp, in which cleavage of the -Tyr-|-Leu- and -Tyr-|-Trp bonds also occurs).. Cleaves peptides in various proteins in a process that requires ATP hydrolysis. Has a chymotrypsin-like activity. Plays a major role in the degradation of misfolded proteins. This is ATP-dependent Clp protease proteolytic subunit from Acorus gramineus (Dwarf sweet flag).